Here is a 424-residue protein sequence, read N- to C-terminus: Putative chloroquine resistance transporter (424 aa).

Residues 1–56 (MTGMKKGKNKKKNVKNDERYKELDSLISNDSEIGNNSRWGGAKRICKLIGNEMRNN) lie on the Cytoplasmic side of the membrane. A helical transmembrane segment spans residues 57-77 (IYVYLLSILYLCVSVMNKVFS). At 78-88 (KRTLNKIGNYS) the chain is on the vacuolar side. Residue asparagine 86 is glycosylated (N-linked (GlcNAc...) asparagine). The helical transmembrane segment at 89 to 109 (FVTSEVHNMICTIVFQLLYFI) threads the bilayer. Topologically, residues 110–125 (YRKTSNPASRNESQKN) are cytoplasmic. A helical membrane pass occupies residues 126-146 (FGWQFFLISLLDASTVIITMI). The Vacuolar segment spans residues 147 to 156 (GLTRTTGNIQ). A helical membrane pass occupies residues 157–177 (SFIMQLIIPVNMYFCFIFLGY). Residues 178 to 180 (RYH) are Cytoplasmic-facing. The chain crosses the membrane as a helical span at residues 181-201 (LFNYLGAFIILITIAAVETVL). Topologically, residues 202-209 (SYETQSDN) are vacuolar. Residues 210-230 (SIIFNLIMIFALIPLSFSNMT) traverse the membrane as a helical segment. Over 231–248 (REVVFKKHKINIIRLNAM) the chain is Cytoplasmic. The chain crosses the membrane as a helical span at residues 249-269 (VALFQFFTSLLVLPVYNISFL). Over 270–317 (KEIYMPFSEMGTNINDGLRCLFYGQSTIVENCGVGMVKMCDQCEGAWK) the chain is Vacuolar. 2 cysteine pairs are disulfide-bonded: cysteine 289–cysteine 312 and cysteine 301–cysteine 309. The helical transmembrane segment at 318 to 338 (TFITYSFFNICDNLLVCYIID) threads the bilayer. Residues 339–346 (KFSTMTYT) are Cytoplasmic-facing. The helical transmembrane segment at 347-367 (IVSCIQGPAITIAYYFKFLAG) threads the bilayer. Over 368-377 (DVVRQPRLLD) the chain is Vacuolar. The chain crosses the membrane as a helical span at residues 378–398 (FLTLFGYLLGTIIYRIGNIIL). The Cytoplasmic portion of the chain corresponds to 399 to 424 (EKKKMLKALNTDGSEAELTSIETSTA).

This sequence belongs to the CRT-like transporter family.

It is found in the vacuole membrane. In terms of biological role, nutrient transporter. Involved in maintaining the osmotic homeostasis of the digestive vacuole. This is Putative chloroquine resistance transporter from Plasmodium chabaudi.